The following is a 431-amino-acid chain: Gamma-glutamyl phosphate reductase (431 aa).

It belongs to the gamma-glutamyl phosphate reductase family.

Its subcellular location is the cytoplasm. The enzyme catalyses L-glutamate 5-semialdehyde + phosphate + NADP(+) = L-glutamyl 5-phosphate + NADPH + H(+). It participates in amino-acid biosynthesis; L-proline biosynthesis; L-glutamate 5-semialdehyde from L-glutamate: step 2/2. Its function is as follows. Catalyzes the NADPH-dependent reduction of L-glutamate 5-phosphate into L-glutamate 5-semialdehyde and phosphate. The product spontaneously undergoes cyclization to form 1-pyrroline-5-carboxylate. This is Gamma-glutamyl phosphate reductase from Acaryochloris marina (strain MBIC 11017).